The following is a 187-amino-acid chain: MLIDQYLDAALLGLIEGLTEFLPVSSTGHLIIFDTLLGFEGPPGKVFEVVIQLGAILAICTVYFARLWKVVTGLKDDPGARHFAMAVILAFLPAMVLGAALHGVIKAVLFNPTVVSIALILGGVAILMAERLVPAPRYHQIERFPAPLALKIGLCQCLALVPGVSRSGATILGSLLMGVDRRTAAEF.

4 helical membrane-spanning segments follow: residues 13-33 (GLIE…LIIF), 45-65 (KVFE…VYFA), 85-105 (MAVI…HGVI), and 108-128 (VLFN…AILM).

It belongs to the UppP family.

The protein localises to the cell inner membrane. The catalysed reaction is di-trans,octa-cis-undecaprenyl diphosphate + H2O = di-trans,octa-cis-undecaprenyl phosphate + phosphate + H(+). Functionally, catalyzes the dephosphorylation of undecaprenyl diphosphate (UPP). Confers resistance to bacitracin. The protein is Undecaprenyl-diphosphatase (uppP) of Azospirillum brasilense.